An 843-amino-acid chain; its full sequence is Eisosome protein 1 (843 aa).

Ser-2 is subject to N-acetylserine. A Phosphoserine modification is found at Ser-2. The tract at residues 13 to 44 (HNIGKTSGGGSRTSSITSSKKSLKHGSKSLRK) is disordered. Residues 33–44 (KSLKHGSKSLRK) show a composition bias toward basic residues. 2 positions are modified to phosphoserine: Ser-88 and Ser-130. Positions 120 to 174 (KMGPKVVRNNSITSATSKTSKESQTKRKSKESPGAAASKAYSMTMETTSLSSQTN) are disordered. Composition is skewed to polar residues over residues 127 to 137 (RNNSITSATSK) and 163 to 174 (TMETTSLSSQTN). Phosphoserine occurs at positions 182, 401, 584, and 710. The tract at residues 717–843 (DLPTQLEKIE…QDAISNQEKK (127 aa)) is disordered. At Thr-720 the chain carries Phosphothreonine. Positions 752 to 764 (STAAKEATETSSA) are enriched in low complexity. Ser-763 and Ser-775 each carry phosphoserine. Basic and acidic residues predominate over residues 781 to 797 (SGKEDANDCKSAEHSKE). Polar residues predominate over residues 798-810 (ISVSQKAGNNKSL). A phosphoserine mark is found at Ser-816, Ser-828, Ser-829, and Ser-838.

It belongs to the EIS1 family.

Its subcellular location is the cytoplasmic granule. It is found in the cell membrane. Functionally, required for normal formation of eisosomes, large cytoplasmic protein assemblies that localize to specialized domains on plasma membrane and mark the site of endocytosis. The polypeptide is Eisosome protein 1 (EIS1) (Saccharomyces cerevisiae (strain Lalvin EC1118 / Prise de mousse) (Baker's yeast)).